The sequence spans 146 residues: Leptin (146 aa).

The cysteines at positions 96 and 146 are disulfide-linked.

The protein belongs to the leptin family.

The protein resides in the secreted. Its function is as follows. Key player in the regulation of energy balance and body weight control. Once released into the circulation, has central and peripheral effects by binding LEPR, found in many tissues, which results in the activation of several major signaling pathways. In the hypothalamus, acts as an appetite-regulating factor that induces a decrease in food intake and an increase in energy consumption by inducing anorexinogenic factors and suppressing orexigenic neuropeptides, also regulates bone mass and secretion of hypothalamo-pituitary-adrenal hormones. In the periphery, increases basal metabolism, influences reproductive function, regulates pancreatic beta-cell function and insulin secretion, is pro-angiogenic for endothelial cell and affects innate and adaptive immunity. In the arcuate nucleus of the hypothalamus, activates by depolarization POMC neurons inducing FOS and SOCS3 expression to release anorexigenic peptides and inhibits by hyperpolarization NPY neurons inducing SOCS3 with a consequent reduction on release of orexigenic peptides. In addition to its known satiety inducing effect, has a modulatory role in nutrient absorption. In the intestine, reduces glucose absorption by enterocytes by activating PKC and leading to a sequential activation of p38, PI3K and ERK signaling pathways which exerts an inhibitory effect on glucose absorption. Acts as a growth factor on certain tissues, through the activation of different signaling pathways increases expression of genes involved in cell cycle regulation such as CCND1, via JAK2-STAT3 pathway, or VEGFA, via MAPK1/3 and PI3K-AKT1 pathways. May also play an apoptotic role via JAK2-STAT3 pathway and up-regulation of BIRC5 expression. Pro-angiogenic, has mitogenic activity on vascular endothelial cells and plays a role in matrix remodeling by regulating the expression of matrix metalloproteinases (MMPs) and tissue inhibitors of metalloproteinases (TIMPs). In innate immunity, modulates the activity and function of neutrophils by increasing chemotaxis and the secretion of oxygen radicals. Increases phagocytosis by macrophages and enhances secretion of pro-inflammatory mediators. Increases cytotoxic ability of NK cells. Plays a pro-inflammatory role, in synergy with IL1B, by inducing NOS2 which promotes the production of IL6, IL8 and Prostaglandin E2, through a signaling pathway that involves JAK2, PI3K, MAP2K1/MEK1 and MAPK14/p38. In adaptive immunity, promotes the switch of memory T-cells towards T helper-1 cell immune responses. Increases CD4(+)CD25(-) T-cell proliferation and reduces autophagy during TCR (T-cell receptor) stimulation, through MTOR signaling pathway activation and BCL2 up-regulation. The sequence is that of Leptin (LEP) from Gorilla gorilla gorilla (Western lowland gorilla).